Consider the following 246-residue polypeptide: Protein PHLOEM PROTEIN 2-LIKE A1 (246 aa).

As to expression, vascular tissues, specifically in phloem companion cell-sieve element complexes.

The sequence is that of Protein PHLOEM PROTEIN 2-LIKE A1 (PP2A1) from Arabidopsis thaliana (Mouse-ear cress).